Here is a 348-residue protein sequence, read N- to C-terminus: MSTGLPEAWPRLLGDVGGSNARFALETAPGVIEDILTLSNERYPTLEDALRDYLAQVGARRVAHAAIGIANPLNGDLVRMTNCHWSFSIEATRRALGLSTLLLLNDFTALALALPRLPRRELAQVGGGAPRPDAPLALIGPGTGLGVSALVPHAGGWRALAGEGGHTSFAPANEREIGIWRYASARFGHVSHERLLSGSGLSLLHRALCALDGAEEAGLAPAEVSARGLSGADARCREALEIFCALLGSAAGNLALTLGARGGVYIGGGIVPRLSGFFEQSPFRRRFEDKGRMSAYLADIPVYLITSAYPALPGVAAHLADHLAPRSDPAPVAAPTHPRGGTAGDMHA.

ATP is bound at residue 14–19; it reads GDVGGS. Residues 327–348 form a disordered region; it reads SDPAPVAAPTHPRGGTAGDMHA.

It belongs to the bacterial glucokinase family.

Its subcellular location is the cytoplasm. It catalyses the reaction D-glucose + ATP = D-glucose 6-phosphate + ADP + H(+). The sequence is that of Glucokinase from Chromobacterium violaceum (strain ATCC 12472 / DSM 30191 / JCM 1249 / CCUG 213 / NBRC 12614 / NCIMB 9131 / NCTC 9757 / MK).